Consider the following 373-residue polypeptide: DNA replication and repair protein RecF (373 aa).

30-37 (GDNAQGKT) contributes to the ATP binding site.

The protein belongs to the RecF family.

Its subcellular location is the cytoplasm. Functionally, the RecF protein is involved in DNA metabolism; it is required for DNA replication and normal SOS inducibility. RecF binds preferentially to single-stranded, linear DNA. It also seems to bind ATP. In Oenococcus oeni (strain ATCC BAA-331 / PSU-1), this protein is DNA replication and repair protein RecF.